The chain runs to 431 residues: Shaggy-related protein kinase beta (431 aa).

Polar residues predominate over residues 12–24 (SGRNFVSSDNVGE). Residues 12 to 65 (SGRNFVSSDNVGETETPRSKPNQNREETESTETTSYEKDSVSSSENSDHLPKEI) form a disordered region. 2 stretches are compositionally biased toward basic and acidic residues: residues 26–39 (ETPR…REET) and 46–65 (SYEK…PKEI). The region spanning 102–386 (YRAEHVIGTG…ALEACAHPFF (285 aa)) is the Protein kinase domain. Residues 108 to 116 (IGTGSFGVV) and Lys131 each bind ATP. Residue Asp227 is the Proton acceptor of the active site. Phosphotyrosine is present on Tyr262.

It belongs to the protein kinase superfamily. CMGC Ser/Thr protein kinase family. GSK-3 subfamily. Post-translationally, autophosphorylated mainly on threonine and serine residues.

It carries out the reaction L-seryl-[protein] + ATP = O-phospho-L-seryl-[protein] + ADP + H(+). It catalyses the reaction L-threonyl-[protein] + ATP = O-phospho-L-threonyl-[protein] + ADP + H(+). May mediate extracellular signals to regulate transcription in differentiating cells. The sequence is that of Shaggy-related protein kinase beta from Arabidopsis thaliana (Mouse-ear cress).